Reading from the N-terminus, the 102-residue chain is Class II hydrophobin 3 (102 aa).

The signal sequence occupies residues 1-16 (MQFLAVAALLFTTALA). Cystine bridges form between Cys-33–Cys-83, Cys-44–Cys-74, Cys-45–Cys-57, and Cys-84–Cys-95.

Belongs to the cerato-ulmin hydrophobin family. As to quaternary structure, homotetramer. Further self-assembles to form highly ordered films at water-air interfaces through intermolecular interactions. Expressed in the conidia, vegetative growth and induction growth stages.

The protein localises to the secreted. Its subcellular location is the cell wall. It localises to the cytoplasm. Its function is as follows. Aerial growth, conidiation, and dispersal of filamentous fungi in the environment rely upon a capability of their secreting small amphipathic proteins called hydrophobins (HPBs) with low sequence identity. Class I can self-assemble into an outermost layer of rodlet bundles on aerial cell surfaces, conferring cellular hydrophobicity that supports fungal growth, development and dispersal; whereas Class II form highly ordered films at water-air interfaces through intermolecular interactions but contribute nothing to the rodlet structure. Hbf3 is a class II hydrophobin that has a role in vegetative growth and asexual development. The chain is Class II hydrophobin 3 from Hypocrea jecorina (strain QM6a) (Trichoderma reesei).